The following is a 229-amino-acid chain: Potassium/proton antiporter CemA (229 aa).

4 consecutive transmembrane segments (helical) span residues 7–27 (FNPL…SFSF), 107–127 (ILNF…YILG), 154–174 (ILLL…ELMI), and 189–209 (IISG…KYLI).

The protein belongs to the CemA family.

It is found in the plastid. It localises to the chloroplast inner membrane. The enzyme catalyses K(+)(in) + H(+)(out) = K(+)(out) + H(+)(in). Its function is as follows. Contributes to K(+)/H(+) antiport activity by supporting proton efflux to control proton extrusion and homeostasis in chloroplasts in a light-dependent manner to modulate photosynthesis. Prevents excessive induction of non-photochemical quenching (NPQ) under continuous-light conditions. Indirectly promotes efficient inorganic carbon uptake into chloroplasts. The sequence is that of Potassium/proton antiporter CemA from Ranunculus macranthus (Large buttercup).